We begin with the raw amino-acid sequence, 154 residues long: Spermatogenesis-associated protein 19, mitochondrial (154 aa).

Residues 1–24 constitute a mitochondrion transit peptide; sequence MIITTWIMYILARKSIGLPFPPRV. 2 positions are modified to phosphoserine: S26 and S116.

Expressed in the testis.

The protein localises to the mitochondrion outer membrane. Its subcellular location is the mitochondrion. The protein resides in the cell projection. It is found in the cilium. It localises to the flagellum. Functionally, essential for sperm motility and male fertility. Plays an important role in sperm motility by regulating the organization and function of the mitochondria and is also required for correct sperm midpiece assembly. The polypeptide is Spermatogenesis-associated protein 19, mitochondrial (Spata19) (Rattus norvegicus (Rat)).